Reading from the N-terminus, the 214-residue chain is Calcineurin B homologous protein 3 (214 aa).

The disordered stretch occupies residues 1-20 (MGAAHSASEEVRELEGKTGF). The N-myristoyl glycine moiety is linked to residue G2. A compositionally biased stretch (basic and acidic residues) spans 7–16 (ASEEVRELEG). The 36-residue stretch at 110-145 (SRKEKLRFLFHMYDSDSDGRITLEEYRNVVEELLSG) folds into the EF-hand domain. Residues D123, D125, D127, R129, and E134 each coordinate Ca(2+).

Belongs to the calcineurin regulatory subunit family. CHP subfamily. Monomer. Homodimer; disulfide-linked. Interacts with SLC9A1/NHE1; the interaction enables an optimal Na(+)/H(+) exchange activity. As to expression, expressed in mature megakaryocytes and polymorphonuclear granulocytes (at protein level). Abundantly expressed in heart. Also expressed at a lower level in adult testis and salivary gland, and in the placenta.

Its subcellular location is the nucleus. It is found in the cytoplasm. The protein resides in the membrane. The protein localises to the cell membrane. It localises to the cell projection. Its subcellular location is the lamellipodium. It is found in the ruffle membrane. Functions as an integral cofactor in cell pH regulation by controlling plasma membrane-type Na(+)/H(+) exchange activity. Promotes the maturation, transport, cell surface stability and exchange activity of SLC9A1/NHE1 at the plasma membrane. Promotes the induction of hematopoietic stem cell differentiation toward megakaryocytic lineage. Essential for the coupling of ERK cascade activation with the expression of ETS family genes in megakaryocytic differentiation. Also involved in granulocytic differentiation in a ERK-dependent manner. Inhibits the phosphatase activity of calcineurin. The polypeptide is Calcineurin B homologous protein 3 (TESC) (Homo sapiens (Human)).